A 305-amino-acid chain; its full sequence is Beta-lactamase (305 aa).

The segment at residues 1 to 34 (MGTTGARPSRRAVLTAAAGAAVAGIPLGGSTAFA) is a signal peptide (tat-type signal). Catalysis depends on Ser82, which acts as the Acyl-ester intermediate. Position 250 to 252 (250 to 252 (KTG)) interacts with substrate.

Belongs to the class-A beta-lactamase family. Predicted to be exported by the Tat system. The position of the signal peptide cleavage has not been experimentally proven.

It catalyses the reaction a beta-lactam + H2O = a substituted beta-amino acid. This Streptomyces lavendulae protein is Beta-lactamase.